A 461-amino-acid polypeptide reads, in one-letter code: uncharacterized protein (461 aa).

Disordered stretches follow at residues 254–273 (NNNNNNNNNNNNNNNNNNNN) and 368–414 (QPSQ…NNNS). Positions 381–413 (NNNNNNNNNNNNNNNNNNNNNNNNNNNNNNNNN) are enriched in low complexity.

This is an uncharacterized protein from Dictyostelium discoideum (Social amoeba).